We begin with the raw amino-acid sequence, 62 residues long: Large ribosomal subunit protein eL24 (62 aa).

Zn(2+) contacts are provided by Cys-7, Cys-10, Cys-33, and Cys-37. The C4-type zinc-finger motif lies at 7–37; sequence CSFCGKDILPGTGLMYVRNDGSLLWFCSSKC.

The protein belongs to the eukaryotic ribosomal protein eL24 family. In terms of assembly, part of the 50S ribosomal subunit. Forms a cluster with proteins L3 and L14. It depends on Zn(2+) as a cofactor.

Its function is as follows. Binds to the 23S rRNA. The protein is Large ribosomal subunit protein eL24 of Sulfolobus acidocaldarius (strain ATCC 33909 / DSM 639 / JCM 8929 / NBRC 15157 / NCIMB 11770).